The following is a 31-amino-acid chain: Cytochrome b6-f complex subunit 6 (31 aa).

Residues 3-23 (AIVAYIGFLALFTGIAAGLLF) traverse the membrane as a helical segment.

The protein belongs to the PetL family. The 4 large subunits of the cytochrome b6-f complex are cytochrome b6, subunit IV (17 kDa polypeptide, PetD), cytochrome f and the Rieske protein, while the 4 small subunits are PetG, PetL, PetM and PetN. The complex functions as a dimer.

The protein localises to the cellular thylakoid membrane. Functionally, component of the cytochrome b6-f complex, which mediates electron transfer between photosystem II (PSII) and photosystem I (PSI), cyclic electron flow around PSI, and state transitions. PetL is important for photoautotrophic growth as well as for electron transfer efficiency and stability of the cytochrome b6-f complex. The protein is Cytochrome b6-f complex subunit 6 of Nostoc sp. (strain PCC 7120 / SAG 25.82 / UTEX 2576).